The chain runs to 333 residues: tRNA uridine(34) hydroxylase (333 aa).

The 95-residue stretch at 123–217 folds into the Rhodanese domain; sequence SDPEVILVDT…YLEEIKQEES (95 aa). Catalysis depends on Cys-177, which acts as the Cysteine persulfide intermediate.

The protein belongs to the TrhO family.

It catalyses the reaction uridine(34) in tRNA + AH2 + O2 = 5-hydroxyuridine(34) in tRNA + A + H2O. Catalyzes oxygen-dependent 5-hydroxyuridine (ho5U) modification at position 34 in tRNAs. The protein is tRNA uridine(34) hydroxylase of Shewanella sp. (strain MR-7).